A 548-amino-acid chain; its full sequence is Sesquiterpene synthase 9 (548 aa).

Mg(2+) is bound by residues aspartate 300, aspartate 304, and glutamate 453. Positions 300–304 (DDTFD) match the DDXXD motif motif.

The protein belongs to the terpene synthase family. Tpsa subfamily. The cofactor is Mg(2+). Requires Mn(2+) as cofactor. Mostly expressed in stem and trichomes, to a lower extent in roots, leaves and flowers and, at low levels, in fruits.

Its subcellular location is the cytoplasm. It catalyses the reaction (2E,6E)-farnesyl diphosphate = germacrene C + diphosphate. It carries out the reaction (2E)-geranyl diphosphate = terpinolene + diphosphate. The catalysed reaction is (2E)-geranyl diphosphate = limonene + diphosphate. The enzyme catalyses (2E)-geranyl diphosphate = beta-myrcene + diphosphate. It catalyses the reaction (2Z,6Z)-farnesyl diphosphate = germacrene C + diphosphate. Its pathway is secondary metabolite biosynthesis; terpenoid biosynthesis. In terms of biological role, involved in the biosynthesis of germacrene C, one of the most abundant sesquiterpene in the leaf oil of tomato. Produces mainly germacrene C, but also smaller amounts of germacrene A, B and D when used with farnesyl diphosphate (FPP) as substrate; able to use both (2E,6E)-farnesyl diphosphate ((EE)-FPP) and (2Z,6Z)-farnesyl diphosphate ((ZZ)-FPP). No or low activity with geranylgeranyl diphosphate (GGPP). Can act with a low efficiency as a monoterpene synthase with geranyl diphosphate (GPP) as substrate, thus producing beta-myrcene, limonene and terpinolene. The polypeptide is Sesquiterpene synthase 9 (Solanum lycopersicum (Tomato)).